Consider the following 130-residue polypeptide: Protachykinin-1 (130 aa).

The N-terminal stretch at 1 to 19 (MKILVAVAVFFLVSTQLFA) is a signal peptide. Positions 20–56 (EEIDANDDLNYWSDWSDSDQIKEAMPEPFEHLLQRIA) are excised as a propeptide. Methionine amide is present on residues M68 and M107.

Belongs to the tachykinin family. The substance P form is cleaved at Pro-59 by the prolyl endopeptidase FAP (seprase) activity (in vitro). Substance P is also cleaved and degraded by Angiotensin-converting enzyme (ACE) and neprilysin (MME).

The protein resides in the secreted. Its function is as follows. Tachykinins are active peptides which excite neurons, evoke behavioral responses, are potent vasodilators and secretagogues, and contract (directly or indirectly) many smooth muscles. The protein is Protachykinin-1 (Tac1) of Mus musculus (Mouse).